The chain runs to 338 residues: MTKMYYEKDTDLNLLKGKTIAVIGYGSQGHAHALNAKESGCNVIIGLYEGSKSWGKAEAQGFEVFSTAEAAKKADIIMILINDELQAAMYKKDIEPNLESGNMLMFAHGFNIHFDQITAPKDVDVTMIAPKGPGHTVRSEYQLGKGVPCLVAVHQDATGRALETALAYANAIGGARAGVLETTFRTETETDLFGEQAVLCGGVCALMQAGFETLVEAGYDERNAYFECIHEMKLIVDLIYQSGFAGMRYSVSNTAEYGDYITGSKIITEETKKTMKKILKDIQDGTFAKDFLLDMSEAGGQAHFKAMRKLAAEHKSEAVGSEIRKLYCWNNEDKLINN.

Residues 2-182 enclose the KARI N-terminal Rossmann domain; it reads TKMYYEKDTD…GGARAGVLET (181 aa). NADP(+) is bound by residues 25-28, Ser-51, Ser-53, and 83-86; these read YGSQ and DELQ. His-108 is an active-site residue. Gly-134 provides a ligand contact to NADP(+). The region spanning 183–330 is the KARI C-terminal knotted domain; that stretch reads TFRTETETDL…SEIRKLYCWN (148 aa). Asp-191, Glu-195, Glu-227, and Glu-231 together coordinate Mg(2+). A substrate-binding site is contributed by Ser-252.

This sequence belongs to the ketol-acid reductoisomerase family. Requires Mg(2+) as cofactor.

It catalyses the reaction (2R)-2,3-dihydroxy-3-methylbutanoate + NADP(+) = (2S)-2-acetolactate + NADPH + H(+). The enzyme catalyses (2R,3R)-2,3-dihydroxy-3-methylpentanoate + NADP(+) = (S)-2-ethyl-2-hydroxy-3-oxobutanoate + NADPH + H(+). It functions in the pathway amino-acid biosynthesis; L-isoleucine biosynthesis; L-isoleucine from 2-oxobutanoate: step 2/4. The protein operates within amino-acid biosynthesis; L-valine biosynthesis; L-valine from pyruvate: step 2/4. In terms of biological role, involved in the biosynthesis of branched-chain amino acids (BCAA). Catalyzes an alkyl-migration followed by a ketol-acid reduction of (S)-2-acetolactate (S2AL) to yield (R)-2,3-dihydroxy-isovalerate. In the isomerase reaction, S2AL is rearranged via a Mg-dependent methyl migration to produce 3-hydroxy-3-methyl-2-ketobutyrate (HMKB). In the reductase reaction, this 2-ketoacid undergoes a metal-dependent reduction by NADPH to yield (R)-2,3-dihydroxy-isovalerate. The protein is Ketol-acid reductoisomerase (NADP(+)) of Clostridium botulinum (strain Alaska E43 / Type E3).